We begin with the raw amino-acid sequence, 325 residues long: uncharacterized protein (325 aa).

Composition is skewed to polar residues over residues 1–21 and 29–57; these read MSYQQRANDSMNSAKQYSSSA and EPFSSSGAPQNRNFDTSYTSEIPSNSSRA. Residues 1–325 are disordered; sequence MSYQQRANDS…LKTGHHSERY (325 aa). Positions 86–109 are enriched in basic and acidic residues; sequence ESRKKEQSDVRGGDTSYSRRHDDS. Composition is skewed to polar residues over residues 114-167 and 174-193; these read NKYS…TTQG and YSQSYPTDTYGSRQKATPSD. 2 stretches are compositionally biased toward low complexity: residues 200–210 and 252–278; these read YDYSSSGSHTH and ATDTTAEANRRAATGTRNARTTAQRNA. Over residues 282–325 the composition is skewed to basic and acidic residues; that stretch reads EDEHVSMGDKMKGNMEKMAGKLTRDPELVQKGEDLKTGHHSERY.

This is an uncharacterized protein from Schizosaccharomyces pombe (strain 972 / ATCC 24843) (Fission yeast).